The primary structure comprises 556 residues: Oxygen-dependent choline dehydrogenase (556 aa).

Residue 6-35 participates in FAD binding; it reads DYIIIGAGSAGNVLAARLTEDPGVTVLLLE. Residue histidine 475 is the Proton acceptor of the active site.

Belongs to the GMC oxidoreductase family. FAD serves as cofactor.

It carries out the reaction choline + A = betaine aldehyde + AH2. The enzyme catalyses betaine aldehyde + NAD(+) + H2O = glycine betaine + NADH + 2 H(+). It functions in the pathway amine and polyamine biosynthesis; betaine biosynthesis via choline pathway; betaine aldehyde from choline (cytochrome c reductase route): step 1/1. Involved in the biosynthesis of the osmoprotectant glycine betaine. Catalyzes the oxidation of choline to betaine aldehyde and betaine aldehyde to glycine betaine at the same rate. This chain is Oxygen-dependent choline dehydrogenase, found in Xanthomonas axonopodis pv. citri (strain 306).